The chain runs to 539 residues: Chaperonin GroEL 1 (539 aa).

ATP-binding positions include 29 to 32 (TLGP), 86 to 90 (DGTTT), G413, and D495.

It belongs to the chaperonin (HSP60) family. Forms a cylinder of 14 subunits composed of two heptameric rings stacked back-to-back. Interacts with the co-chaperonin GroES.

The protein resides in the cytoplasm. The enzyme catalyses ATP + H2O + a folded polypeptide = ADP + phosphate + an unfolded polypeptide.. In terms of biological role, together with its co-chaperonin GroES, plays an essential role in assisting protein folding. The GroEL-GroES system forms a nano-cage that allows encapsulation of the non-native substrate proteins and provides a physical environment optimized to promote and accelerate protein folding. The sequence is that of Chaperonin GroEL 1 from Mycobacterium bovis (strain ATCC BAA-935 / AF2122/97).